A 296-amino-acid polypeptide reads, in one-letter code: Phosphatidylglycerol--prolipoprotein diacylglyceryl transferase (296 aa).

A run of 7 helical transmembrane segments spans residues 17–37 (LAVRWYGLMYLVGFIAAIVVG), 59–79 (MMFYGVLGTVLGGRLGYVLFY), 97–117 (GGMSFHGGFLGVTLAMVLFAW), 129–149 (FVAPMVPAGLAAGRLGNFING), 203–223 (PSQLYEIALEGIALFFVLFFF), 230–250 (LGAVSALFLIGYGLARFTVEF), and 265–285 (LSMGQWLSLPMILAGIALLVW). Arg142 contacts a 1,2-diacyl-sn-glycero-3-phospho-(1'-sn-glycerol).

It belongs to the Lgt family.

It localises to the cell inner membrane. It carries out the reaction L-cysteinyl-[prolipoprotein] + a 1,2-diacyl-sn-glycero-3-phospho-(1'-sn-glycerol) = an S-1,2-diacyl-sn-glyceryl-L-cysteinyl-[prolipoprotein] + sn-glycerol 1-phosphate + H(+). It functions in the pathway protein modification; lipoprotein biosynthesis (diacylglyceryl transfer). Catalyzes the transfer of the diacylglyceryl group from phosphatidylglycerol to the sulfhydryl group of the N-terminal cysteine of a prolipoprotein, the first step in the formation of mature lipoproteins. This Burkholderia ambifaria (strain MC40-6) protein is Phosphatidylglycerol--prolipoprotein diacylglyceryl transferase.